The following is a 184-amino-acid chain: Ethylene-responsive transcription factor ERF122 (184 aa).

Residues 120 to 177 (KYKGVRKKPSGKWAAEIWDPRSKSRRWLGTFLTAEMAAQSYNDAAAEYRARRGKTNGE) constitute a DNA-binding region (AP2/ERF).

It belongs to the AP2/ERF transcription factor family. ERF subfamily.

The protein resides in the nucleus. Its function is as follows. Probably acts as a transcriptional activator. Binds to the GCC-box pathogenesis-related promoter element. May be involved in the regulation of gene expression by stress factors and by components of stress signal transduction pathways. The polypeptide is Ethylene-responsive transcription factor ERF122 (ERF122) (Arabidopsis thaliana (Mouse-ear cress)).